The primary structure comprises 169 residues: Cell cycle link protein (169 aa).

Residues 9 to 22 are binding to host SKP1 protein; it reads LPEELRQKIVHDHL. Residues 110-114 carry the LXCXE motif, interaction with host RBR motif; sequence LLCRE.

This sequence belongs to the nanovirus Clink protein family. In terms of assembly, interacts with host SKP1. Interacts (via LXCXE domain) with host retinoblastoma-related protein 1 (RBR1). Interacts (via LXCXE domain) with retinoblastoma-related proteins (RBR).

Functionally, interacts with and disrupts the function of host retinoblastoma-related proteins RBR, which are key regulators of the cell cycle. Induces transcriptional activation of E2F-regulated S-phase and G2/M-phase-specific genes. Inactivation of the ability of RBR to arrest the cell cycle leads to the stimulation of viral DNA replication. The sequence is that of Cell cycle link protein (DNA-C) from Cicer arietinum (Chickpea).